The following is a 92-amino-acid chain: DNA-directed RNA polymerase subunit omega (92 aa).

It belongs to the RNA polymerase subunit omega family. In terms of assembly, the RNAP catalytic core consists of 2 alpha, 1 beta, 1 beta' and 1 omega subunit. When a sigma factor is associated with the core the holoenzyme is formed, which can initiate transcription.

The enzyme catalyses RNA(n) + a ribonucleoside 5'-triphosphate = RNA(n+1) + diphosphate. Promotes RNA polymerase assembly. Latches the N- and C-terminal regions of the beta' subunit thereby facilitating its interaction with the beta and alpha subunits. This chain is DNA-directed RNA polymerase subunit omega, found in Shewanella oneidensis (strain ATCC 700550 / JCM 31522 / CIP 106686 / LMG 19005 / NCIMB 14063 / MR-1).